Consider the following 314-residue polypeptide: tRNA dimethylallyltransferase (314 aa).

The interval 1–25 is disordered; that stretch reads MAEEPQRSPAPTSPFAFTVPSNSLS. 40–47 contributes to the ATP binding site; sequence GPTASGKS. Residue 42–47 participates in substrate binding; sequence TASGKS.

This sequence belongs to the IPP transferase family. In terms of assembly, monomer. The cofactor is Mg(2+).

It catalyses the reaction adenosine(37) in tRNA + dimethylallyl diphosphate = N(6)-dimethylallyladenosine(37) in tRNA + diphosphate. Functionally, catalyzes the transfer of a dimethylallyl group onto the adenine at position 37 in tRNAs that read codons beginning with uridine, leading to the formation of N6-(dimethylallyl)adenosine (i(6)A). In Cereibacter sphaeroides (strain ATCC 17023 / DSM 158 / JCM 6121 / CCUG 31486 / LMG 2827 / NBRC 12203 / NCIMB 8253 / ATH 2.4.1.) (Rhodobacter sphaeroides), this protein is tRNA dimethylallyltransferase.